The following is a 103-amino-acid chain: Small ribosomal subunit protein uS10 (103 aa).

Belongs to the universal ribosomal protein uS10 family. In terms of assembly, part of the 30S ribosomal subunit.

Functionally, involved in the binding of tRNA to the ribosomes. This chain is Small ribosomal subunit protein uS10, found in Bordetella avium (strain 197N).